Reading from the N-terminus, the 555-residue chain is Efflux pump FUS6 (555 aa).

A disordered region spans residues 1 to 23 (MASAKDAQPAPEKSLSSDPQPEP). A run of 5 helical transmembrane segments spans residues 31 to 51 (WLIFVAISLTTFLAALDTSII), 67 to 87 (LYVWIIDAYLLASTATIPIFA), 97 to 117 (SLTLIAVCIFTLGSGLCGGAH), 130 to 150 (GIGGGGILTMSEIVVCDMVSI), and 159 to 179 (IIGGVWAIAAVVAPVMGGAFA). An N-linked (GlcNAc...) asparagine glycan is attached at Asn-181. The next 3 membrane-spanning stretches (helical) occupy residues 186-206 (WIFYINLPIAGVSLVALGLFL), 225-245 (WGGSVLLIGSVTSIVLALSWG), and 253-273 (GWQTIVPLVIGLLALVAFFAY). Asn-291 carries N-linked (GlcNAc...) asparagine glycosylation. The next 6 membrane-spanning stretches (helical) occupy residues 297 to 317 (LLVISFIHSLLLYWICYFLPV), 332 to 352 (VMLFPIACTSAPAGVAAGITI), 360 to 380 (VWHFTGFVLMSIACGLFTLLD), 393 to 413 (ILFGVGTGTVFTSTLPPILAS), 425 to 445 (AWTFIRNFGSIWGVAIPAAVF), and 501 to 521 (KVVWQVSLAFCLLGFILCFFV). Asn-545 carries N-linked (GlcNAc...) asparagine glycosylation.

It belongs to the major facilitator superfamily. TCR/Tet family.

It localises to the membrane. Efflux pump; part of the gene cluster that mediates the biosynthesis of the mycotoxin fusarin C. Within the cluster, FUS1, FUS2, FUS8 and FUS9 are sufficient for fusarin production. The other FUS cluster members are not essential for fusarin C biosynthesis. This chain is Efflux pump FUS6, found in Gibberella fujikuroi (strain CBS 195.34 / IMI 58289 / NRRL A-6831) (Bakanae and foot rot disease fungus).